Reading from the N-terminus, the 529-residue chain is UDP-glucuronosyltransferase 2B11 (529 aa).

The signal sequence occupies residues methionine 1 to glycine 21. At lysine 135 the chain carries N6-succinyllysine. Residue asparagine 315 is glycosylated (N-linked (GlcNAc...) asparagine). A helical transmembrane segment spans residues valine 493–leucine 513.

Belongs to the UDP-glycosyltransferase family. As to expression, widely expressed.

The protein localises to the microsome membrane. The protein resides in the endoplasmic reticulum membrane. The catalysed reaction is glucuronate acceptor + UDP-alpha-D-glucuronate = acceptor beta-D-glucuronoside + UDP + H(+). Its function is as follows. UDPGT is of major importance in the conjugation and subsequent elimination of potentially toxic xenobiotics and endogenous compounds. The polypeptide is UDP-glucuronosyltransferase 2B11 (UGT2B11) (Homo sapiens (Human)).